The following is a 322-amino-acid chain: Ornithine carbamoyltransferase (322 aa).

Carbamoyl phosphate contacts are provided by residues 67–70 (STRT), glutamine 94, arginine 118, and 145–148 (HPCQ). L-ornithine contacts are provided by residues asparagine 176, aspartate 240, and 244–245 (SM). Residues 280–281 (CL) and arginine 308 each bind carbamoyl phosphate.

Belongs to the aspartate/ornithine carbamoyltransferase superfamily. OTCase family.

The protein resides in the cytoplasm. The enzyme catalyses carbamoyl phosphate + L-ornithine = L-citrulline + phosphate + H(+). Its pathway is amino-acid biosynthesis; L-arginine biosynthesis; L-arginine from L-ornithine and carbamoyl phosphate: step 1/3. Functionally, reversibly catalyzes the transfer of the carbamoyl group from carbamoyl phosphate (CP) to the N(epsilon) atom of ornithine (ORN) to produce L-citrulline. The polypeptide is Ornithine carbamoyltransferase (Oceanobacillus iheyensis (strain DSM 14371 / CIP 107618 / JCM 11309 / KCTC 3954 / HTE831)).